We begin with the raw amino-acid sequence, 102 residues long: Small ribosomal subunit protein uS10 (102 aa).

This sequence belongs to the universal ribosomal protein uS10 family. As to quaternary structure, part of the 30S ribosomal subunit.

In terms of biological role, involved in the binding of tRNA to the ribosomes. The protein is Small ribosomal subunit protein uS10 of Bacillus thuringiensis (strain Al Hakam).